The following is a 47-amino-acid chain: Putative beta-neurotoxin (47 aa).

An LCN-type CS-alpha/beta domain is found at 1 to 47; that stretch reads KEGYMGSDGCKMSCVINDQFCDTECQAKLKGSTGYCYFXGLACYXXG. 2 disulfide bridges follow: cysteine 14-cysteine 36 and cysteine 21-cysteine 43.

As to expression, expressed by the venom gland.

Its subcellular location is the secreted. In terms of biological role, causes transient paralysis of the rear legs of and spasms in insects (A.domestica). The sequence is that of Putative beta-neurotoxin from Rhopalurus junceus (Caribbean blue scorpion).